The sequence spans 124 residues: ATP synthase epsilon chain (124 aa).

This sequence belongs to the ATPase epsilon chain family. As to quaternary structure, F-type ATPases have 2 components, CF(1) - the catalytic core - and CF(0) - the membrane proton channel. CF(1) has five subunits: alpha(3), beta(3), gamma(1), delta(1), epsilon(1). CF(0) has three main subunits: a, b and c.

The protein localises to the cell membrane. Functionally, produces ATP from ADP in the presence of a proton gradient across the membrane. The protein is ATP synthase epsilon chain of Corynebacterium glutamicum (strain ATCC 13032 / DSM 20300 / JCM 1318 / BCRC 11384 / CCUG 27702 / LMG 3730 / NBRC 12168 / NCIMB 10025 / NRRL B-2784 / 534).